We begin with the raw amino-acid sequence, 346 residues long: UDP-N-acetylenolpyruvoylglucosamine reductase (346 aa).

The region spanning 23-194 is the FAD-binding PCMH-type domain; it reads FDVRARLACR…VSVTFRLPKV (172 aa). Arg170 is a catalytic residue. Ser246 acts as the Proton donor in catalysis. The active site involves Glu342.

The protein belongs to the MurB family. It depends on FAD as a cofactor.

It is found in the cytoplasm. It carries out the reaction UDP-N-acetyl-alpha-D-muramate + NADP(+) = UDP-N-acetyl-3-O-(1-carboxyvinyl)-alpha-D-glucosamine + NADPH + H(+). It participates in cell wall biogenesis; peptidoglycan biosynthesis. Cell wall formation. The sequence is that of UDP-N-acetylenolpyruvoylglucosamine reductase from Paraburkholderia phymatum (strain DSM 17167 / CIP 108236 / LMG 21445 / STM815) (Burkholderia phymatum).